The primary structure comprises 62 residues: Large ribosomal subunit protein bL28 (62 aa).

This sequence belongs to the bacterial ribosomal protein bL28 family.

The protein is Large ribosomal subunit protein bL28 of Streptococcus mutans serotype c (strain ATCC 700610 / UA159).